A 171-amino-acid chain; its full sequence is 3-hydroxydecanoyl-[acyl-carrier-protein] dehydratase (171 aa).

Residue histidine 70 is part of the active site.

It belongs to the thioester dehydratase family. FabA subfamily. As to quaternary structure, homodimer.

It is found in the cytoplasm. The catalysed reaction is a (3R)-hydroxyacyl-[ACP] = a (2E)-enoyl-[ACP] + H2O. It catalyses the reaction (3R)-hydroxydecanoyl-[ACP] = (2E)-decenoyl-[ACP] + H2O. The enzyme catalyses (2E)-decenoyl-[ACP] = (3Z)-decenoyl-[ACP]. It functions in the pathway lipid metabolism; fatty acid biosynthesis. Its function is as follows. Necessary for the introduction of cis unsaturation into fatty acids. Catalyzes the dehydration of (3R)-3-hydroxydecanoyl-ACP to E-(2)-decenoyl-ACP and then its isomerization to Z-(3)-decenoyl-ACP. Can catalyze the dehydratase reaction for beta-hydroxyacyl-ACPs with saturated chain lengths up to 16:0, being most active on intermediate chain length. The sequence is that of 3-hydroxydecanoyl-[acyl-carrier-protein] dehydratase from Shewanella pealeana (strain ATCC 700345 / ANG-SQ1).